The primary structure comprises 413 residues: D-nopaline dehydrogenase (413 aa).

Belongs to the lysopine/nopaline/octopine/opine/vitopine dehydrogenases family. Homotetramer.

It catalyses the reaction D-nopaline + NADP(+) + H2O = L-arginine + 2-oxoglutarate + NADPH + H(+). This Agrobacterium tumefaciens (strain T37) protein is D-nopaline dehydrogenase (nos).